The sequence spans 692 residues: Follicle-stimulating hormone receptor (692 aa).

The first 17 residues, 1 to 17 (MALLLVSLLAFLGSGSG), serve as a signal peptide directing secretion. Cystine bridges form between cysteine 18–cysteine 25 and cysteine 23–cysteine 32. The region spanning 18-46 (CHHWLCHCSNRVFLCQDSKVTEIPPDLPR) is the LRRNT domain. Topologically, residues 18–365 (CHHWLCHCSN…EDIMGYNILR (348 aa)) are extracellular. 9 LRR repeats span residues 49 to 72 (IELR…FGDL), 73 to 97 (EKIE…LPNL), 98 to 118 (HEIR…AFQN), 119 to 143 (LPSL…KIQS), 144 to 169 (LQKV…MGLS), 170 to 192 (FESV…AFNG), 193 to 216 (TQLD…VFQG), 217 to 240 (ASGP…GLEN), and 241 to 259 (LKKL…PSLD). N-linked (GlcNAc...) asparagine glycosylation is found at asparagine 191 and asparagine 199. 4 disulfides stabilise this stretch: cysteine 275–cysteine 345, cysteine 276–cysteine 292, cysteine 276–cysteine 355, and cysteine 292–cysteine 337. Asparagine 293 carries an N-linked (GlcNAc...) asparagine glycan. Residue tyrosine 334 is modified to Sulfotyrosine. A helical transmembrane segment spans residues 366–386 (VLIWFISILAITGNTTVLVVL). The Cytoplasmic portion of the chain corresponds to 387-397 (TTSQYKLTVPR). Residues 398–420 (FLMCNLAFADLCIGIYLLLIASV) form a helical membrane-spanning segment. Topologically, residues 421–442 (DIHTKSQYHNYAIDWQTGAGCD) are extracellular. A disulfide bond links cysteine 441 and cysteine 516. The chain crosses the membrane as a helical span at residues 443 to 464 (AAGFFTVFASELSVYTLAAITL). Residues 465–484 (ERWHTITHAMQLECKVQLCH) are Cytoplasmic-facing. The helical transmembrane segment at 485–507 (AASIMVLGWAFAFAAALFPIFGI) threads the bilayer. The Extracellular portion of the chain corresponds to 508–527 (SSYMKVSICLPMDIDSPLSQ). The chain crosses the membrane as a helical span at residues 528-549 (LYVMALLVLNALAFVVICGCYT). The Cytoplasmic portion of the chain corresponds to 550–572 (HIYLTVRNPNIVSSSRDTKIAKR). A helical transmembrane segment spans residues 573 to 596 (MATLIFTDFLCMAPILFFAISASL). Residues 597–607 (KVPLITVSKAK) are Extracellular-facing. Residues 608 to 629 (ILLVLFYPINSCANPFLYAIFT) traverse the membrane as a helical segment. Residues 630–692 (KNFRRDFFVL…LVPLNHSVQN (63 aa)) are Cytoplasmic-facing.

It belongs to the G-protein coupled receptor 1 family. FSH/LSH/TSH subfamily. In terms of assembly, homotrimer. Functions as a homotrimer binding the FSH hormone heterodimer composed of CGA and FSHB. Interacts with ARRB2. Interacts with APPL2; interaction is independent of follicle stimulating hormone stimulation. Post-translationally, N-glycosylated; indirectly required for FSH-binding, possibly via a conformational change that allows high affinity binding of hormone. In terms of processing, sulfated.

The protein localises to the cell membrane. G protein-coupled receptor for follitropin, the follicle-stimulating hormone. Through cAMP production activates the downstream PI3K-AKT and ERK1/ERK2 signaling pathways. The chain is Follicle-stimulating hormone receptor (Fshr) from Mus musculus (Mouse).